The sequence spans 746 residues: MASVLGSGRGSGGLSSQLKCKSKRRRRRRSKRKDKVSILSTFLAPFKYLSPGTTNTEDEDNLSTSSAEVKENRNVSNLGTRPLPPGDWARGGSTPSVKRKRPLEEGNGGHFCKLQLIWKKLSWSMTPKNALVQLHELKPGLQYRMVSQTGPVHAPVFAVAVEVNGLTFEGTGPTKKKAKMRAAEMALKSFVQFPNAFQAHLAMGSSTSPCTDFTSDQADFPDTLFKEFEPSSRNEDFPGCCPVDTEFLSSAYRRGRLLYHTLDLMGQALPDRSRLAPGALGERNPVVVLNELRSGLRYVCLSETAEKPRVKSFVMAVCVDGRTFEGSGRSKKLAKGQAAQAALQALFDIRLPGHIPSRSKSNLLPQDFADSVSQLVTQKFRELTVGLTSVYARHKTLAGIVMTKGLDTKQAQVIVLSSGTKCISGEHISDQGLVVNDCHAEIVARRAFLHFLYTQLELHLSKHQEDPERSIFIRVKEGGYRLRENILFHLYVSTSPCGDARLNSPYEITIDLNSSKHIVRKFRGHLRTKIESGEGTVPVRGPSAVQTWDGILLGEQLVTMSCTDKIASWNVLGLQGALLCHFIEPVYLHSIIVGSLHHTGHLARVMSHRMEGIGQLPASYRQNRPLLSGVSNAEARQPGKSPHFSANWVVGSADLEIINATTGKRSCGGSSRLCKHVFSARWARLHGRLSTRIPGHGDTPSMYCEAKRGAHTYQSVKQQLFKAFQKAGLGTWVRKPPEQDQFLLSL.

Disordered regions lie at residues 1 to 36 and 50 to 105; these read MASVLGSGRGSGGLSSQLKCKSKRRRRRRSKRKDKV and SPGT…PLEE. A compositionally biased stretch (basic residues) spans 20–34; sequence CKSKRRRRRRSKRKD. The segment at 23–35 is R-domain (ssRNA-binding); sequence KRRRRRRSKRKDK. DRBM domains follow at residues 126 to 192 and 284 to 348; these read TPKN…SFVQ and NPVV…ALFD. The 328-residue stretch at 415 to 742 folds into the A to I editase domain; it reads VLSSGTKCIS…VRKPPEQDQF (328 aa). His439 is a Zn(2+) binding site. The active-site Proton donor is the Glu441. Zn(2+) is bound by residues Cys497 and Cys562.

In terms of tissue distribution, brain specific.

It localises to the nucleus. Its function is as follows. Lacks editing activity. It prevents the binding of other ADAR enzymes to targets in vitro, and decreases the efficiency of these enzymes. Capable of binding to dsRNA but also to ssRNA. The polypeptide is Double-stranded RNA-specific editase B2 (Adarb2) (Rattus norvegicus (Rat)).